The sequence spans 113 residues: UPF0122 protein MGAS10270_Spy1030 (113 aa).

The protein belongs to the UPF0122 family.

Functionally, might take part in the signal recognition particle (SRP) pathway. This is inferred from the conservation of its genetic proximity to ftsY/ffh. May be a regulatory protein. The chain is UPF0122 protein MGAS10270_Spy1030 from Streptococcus pyogenes serotype M2 (strain MGAS10270).